Reading from the N-terminus, the 414-residue chain is S-adenosylmethionine synthase (414 aa).

Position 11 (H11) interacts with ATP. Residue D13 participates in Mg(2+) binding. Residue E39 participates in K(+) binding. 2 residues coordinate L-methionine: E52 and Q95. The interval 95-105 is flexible loop; the sequence is QSPDIAQGVNL. Residues 169-171, 245-246, D254, 260-261, A277, and K281 each bind ATP; these read DGK, KF, and RK. D254 is a binding site for L-methionine. L-methionine is bound at residue K285.

The protein belongs to the AdoMet synthase family. As to quaternary structure, homotetramer; dimer of dimers. Mg(2+) is required as a cofactor. Requires K(+) as cofactor.

The protein resides in the cytoplasm. It catalyses the reaction L-methionine + ATP + H2O = S-adenosyl-L-methionine + phosphate + diphosphate. It functions in the pathway amino-acid biosynthesis; S-adenosyl-L-methionine biosynthesis; S-adenosyl-L-methionine from L-methionine: step 1/1. Its function is as follows. Catalyzes the formation of S-adenosylmethionine (AdoMet) from methionine and ATP. The overall synthetic reaction is composed of two sequential steps, AdoMet formation and the subsequent tripolyphosphate hydrolysis which occurs prior to release of AdoMet from the enzyme. This chain is S-adenosylmethionine synthase, found in Synechococcus sp. (strain JA-3-3Ab) (Cyanobacteria bacterium Yellowstone A-Prime).